A 434-amino-acid polypeptide reads, in one-letter code: UDP-N-acetylmuramoylalanine--D-glutamate ligase (434 aa).

126–132 serves as a coordination point for ATP; it reads GTSGKTT.

Belongs to the MurCDEF family.

It localises to the cytoplasm. It catalyses the reaction UDP-N-acetyl-alpha-D-muramoyl-L-alanine + D-glutamate + ATP = UDP-N-acetyl-alpha-D-muramoyl-L-alanyl-D-glutamate + ADP + phosphate + H(+). It functions in the pathway cell wall biogenesis; peptidoglycan biosynthesis. Functionally, cell wall formation. Catalyzes the addition of glutamate to the nucleotide precursor UDP-N-acetylmuramoyl-L-alanine (UMA). This chain is UDP-N-acetylmuramoylalanine--D-glutamate ligase, found in Desulfovibrio desulfuricans (strain ATCC 27774 / DSM 6949 / MB).